A 143-amino-acid polypeptide reads, in one-letter code: Large ribosomal subunit protein uL16 (143 aa).

The protein belongs to the universal ribosomal protein uL16 family. As to quaternary structure, part of the 50S ribosomal subunit.

Binds 23S rRNA and is also seen to make contacts with the A and possibly P site tRNAs. In Thermosynechococcus vestitus (strain NIES-2133 / IAM M-273 / BP-1), this protein is Large ribosomal subunit protein uL16.